Here is a 415-residue protein sequence, read N- to C-terminus: Carbamoyl phosphate synthase arginine-specific small chain (415 aa).

A mitochondrion-targeting transit peptide spans 1–17; it reads MLRFLKPFPLRFGKRFY. Ser-88, Gly-272, and Gly-274 together coordinate L-glutamine. The 188-residue stretch at 225–412 folds into the Glutamine amidotransferase type-1 domain; that stretch reads NIAVIDCGVK…IKEAIKYQKS (188 aa). The Nucleophile role is filled by Cys-301. Met-302, Gln-305, Asn-343, Gly-345, and Tyr-346 together coordinate L-glutamine. Catalysis depends on residues His-385 and Glu-387.

The protein belongs to the CarA family. As to quaternary structure, heterodimer composed of 2 chains; the small (or glutamine) chain promotes the hydrolysis of glutamine to ammonia, which is used by the large (or ammonia) chain to synthesize carbamoyl phosphate.

It localises to the mitochondrion. It is found in the cytoplasm. The catalysed reaction is hydrogencarbonate + L-glutamine + 2 ATP + H2O = carbamoyl phosphate + L-glutamate + 2 ADP + phosphate + 2 H(+). It carries out the reaction L-glutamine + H2O = L-glutamate + NH4(+). It functions in the pathway amino-acid biosynthesis; L-arginine biosynthesis; carbamoyl phosphate from bicarbonate: step 1/1. Functionally, small subunit of the arginine-specific carbamoyl phosphate synthase (CPSase). CPSase catalyzes the formation of carbamoyl phosphate from the ammonia moiety of glutamine, carbonate, and phosphate donated by ATP, the first step of the arginine biosynthetic pathway. The small subunit (glutamine amidotransferase) binds and cleaves glutamine to supply the large subunit with the substrate ammonia. This Schizosaccharomyces pombe (strain 972 / ATCC 24843) (Fission yeast) protein is Carbamoyl phosphate synthase arginine-specific small chain (arg5).